Consider the following 77-residue polypeptide: DNA-directed RNA polymerase subunit omega (77 aa).

Belongs to the RNA polymerase subunit omega family. The RNAP catalytic core consists of 2 alpha, 1 beta, 1 beta' and 1 omega subunit. When a sigma factor is associated with the core the holoenzyme is formed, which can initiate transcription.

It catalyses the reaction RNA(n) + a ribonucleoside 5'-triphosphate = RNA(n+1) + diphosphate. Promotes RNA polymerase assembly. Latches the N- and C-terminal regions of the beta' subunit thereby facilitating its interaction with the beta and alpha subunits. This is DNA-directed RNA polymerase subunit omega from Dichelobacter nodosus (strain VCS1703A).